The sequence spans 235 residues: Probable septum site-determining protein MinC (235 aa).

Positions Lys-104–Pro-125 are disordered. A compositionally biased stretch (pro residues) spans Pro-110–Pro-119.

It belongs to the MinC family. As to quaternary structure, interacts with MinD and FtsZ.

Functionally, cell division inhibitor that blocks the formation of polar Z ring septums. Rapidly oscillates between the poles of the cell to destabilize FtsZ filaments that have formed before they mature into polar Z rings. Prevents FtsZ polymerization. The chain is Probable septum site-determining protein MinC from Salmonella agona (strain SL483).